The primary structure comprises 185 residues: Ribosome-recycling factor (185 aa).

This sequence belongs to the RRF family.

It localises to the cytoplasm. Responsible for the release of ribosomes from messenger RNA at the termination of protein biosynthesis. May increase the efficiency of translation by recycling ribosomes from one round of translation to another. The chain is Ribosome-recycling factor from Halalkalibacterium halodurans (strain ATCC BAA-125 / DSM 18197 / FERM 7344 / JCM 9153 / C-125) (Bacillus halodurans).